A 582-amino-acid polypeptide reads, in one-letter code: Colicin-E9 (582 aa).

5 disordered regions span residues 1–74, 246–270, 294–321, 422–489, and 510–542; these read MSGG…SGGG, SPGV…NTRD, PDQV…EAAE, ADAA…IADK, and SKDP…QQVG. The span at 20-35 shows a compositional bias: gly residues; the sequence is INGGPTGIGVSGGASD. Residues 36 to 45 show a composition bias toward low complexity; sequence GSGWSSENNP. A compositionally biased stretch (gly residues) spans 46–74; sequence WGGGSGSGIHWGGGSGRGNGGGNGNSGGG. Basic and acidic residues-rich tracts occupy residues 297 to 321, 430 to 453, and 465 to 476; these read VKQR…EAAE, QERR…ESKR, and PVGDKWLDDAGK. A compositionally biased stretch (low complexity) spans 516–529; that stretch reads SKNLNPSNKSSVSK. Positions 550, 575, and 579 each coordinate Zn(2+).

It belongs to the colicin/pyosin nuclease family.

This plasmid-coded bactericidal protein is an endonuclease active on both single- and double-stranded DNA but with undefined specificity. In terms of biological role, colicins are polypeptide toxins produced by and active against E.coli and closely related bacteria. In Escherichia coli, this protein is Colicin-E9 (col).